A 305-amino-acid chain; its full sequence is Beta-lactamase (305 aa).

The tat-type signal signal peptide spans 1–34 (MGTTGARPSRRAVLTAAAGAAVAGIPLGGSTAFA). Serine 82 serves as the catalytic Acyl-ester intermediate. Residue 250 to 252 (KTG) coordinates substrate.

It belongs to the class-A beta-lactamase family. Predicted to be exported by the Tat system. The position of the signal peptide cleavage has not been experimentally proven.

The catalysed reaction is a beta-lactam + H2O = a substituted beta-amino acid. In Streptomyces lavendulae, this protein is Beta-lactamase.